Here is a 212-residue protein sequence, read N- to C-terminus: Adenylate kinase (212 aa).

10–15 (GAGKGT) contributes to the ATP binding site. Residues 30 to 59 (STGDMFRAAMANQTEMGRLAKSYIDKGELV) form an NMP region. AMP contacts are provided by residues Thr31, Arg36, 57–59 (ELV), 86–89 (GYPR), and Gln93. The interval 127–159 (GRIINRKTGETFHKVFNPPVDYKEEDYYQREDD) is LID. ATP is bound by residues Arg128 and 137–138 (TF). Residues Arg156 and Arg167 each coordinate AMP. Gln195 provides a ligand contact to ATP.

The protein belongs to the adenylate kinase family. In terms of assembly, monomer.

It localises to the cytoplasm. It carries out the reaction AMP + ATP = 2 ADP. It functions in the pathway purine metabolism; AMP biosynthesis via salvage pathway; AMP from ADP: step 1/1. In terms of biological role, catalyzes the reversible transfer of the terminal phosphate group between ATP and AMP. Plays an important role in cellular energy homeostasis and in adenine nucleotide metabolism. The polypeptide is Adenylate kinase (Streptococcus agalactiae serotype III (strain NEM316)).